A 465-amino-acid polypeptide reads, in one-letter code: Intraflagellar transport protein 54 (465 aa).

Disordered stretches follow at residues Val-119–Met-301 and Leu-347–Pro-366. Positions Leu-144–Gln-207 form a coiled coil. Residues Ala-146–Lys-198 are compositionally biased toward basic and acidic residues. Residues Gln-199–Lys-220 show a composition bias toward low complexity. Residues Arg-222–His-242 are compositionally biased toward basic and acidic residues.

Belongs to the TRAF3IP1 family.

It localises to the cell projection. Its subcellular location is the cilium. It is found in the flagellum. The protein localises to the cytoplasm. The protein resides in the cytoskeleton. It localises to the flagellum axoneme. Its subcellular location is the flagellum basal body. In terms of biological role, component of the intraflagellar transport complex B (IFT-B) involved in flagellar assembly. The protein is Intraflagellar transport protein 54 of Giardia intestinalis (strain ATCC 50803 / WB clone C6) (Giardia lamblia).